Consider the following 604-residue polypeptide: Elongation factor 4 (604 aa).

The region spanning 9–191 is the tr-type G domain; the sequence is DAIRNFCIIA…AVISRVPAPA (183 aa). GTP contacts are provided by residues 21-26 and 138-141; these read DHGKST and NKID.

The protein belongs to the TRAFAC class translation factor GTPase superfamily. Classic translation factor GTPase family. LepA subfamily.

Its subcellular location is the cell inner membrane. It carries out the reaction GTP + H2O = GDP + phosphate + H(+). Its function is as follows. Required for accurate and efficient protein synthesis under certain stress conditions. May act as a fidelity factor of the translation reaction, by catalyzing a one-codon backward translocation of tRNAs on improperly translocated ribosomes. Back-translocation proceeds from a post-translocation (POST) complex to a pre-translocation (PRE) complex, thus giving elongation factor G a second chance to translocate the tRNAs correctly. Binds to ribosomes in a GTP-dependent manner. The protein is Elongation factor 4 of Prosthecochloris aestuarii (strain DSM 271 / SK 413).